The chain runs to 715 residues: 1,4-alpha-glucan branching enzyme GlgB (715 aa).

The Nucleophile role is filled by Asp-396. Catalysis depends on Glu-449, which acts as the Proton donor.

The protein belongs to the glycosyl hydrolase 13 family. GlgB subfamily. In terms of assembly, monomer.

It carries out the reaction Transfers a segment of a (1-&gt;4)-alpha-D-glucan chain to a primary hydroxy group in a similar glucan chain.. Its pathway is glycan biosynthesis; glycogen biosynthesis. Catalyzes the formation of the alpha-1,6-glucosidic linkages in glycogen by scission of a 1,4-alpha-linked oligosaccharide from growing alpha-1,4-glucan chains and the subsequent attachment of the oligosaccharide to the alpha-1,6 position. The polypeptide is 1,4-alpha-glucan branching enzyme GlgB (Vibrio vulnificus (strain CMCP6)).